Consider the following 626-residue polypeptide: Lipoprotein LpqB (626 aa).

The first 23 residues, 1–23 (MIGQANRIAAAVSTACLAVLLAG), serve as a signal peptide directing secretion. A lipid anchor (N-palmitoyl cysteine) is attached at Cys24. Cys24 carries S-diacylglycerol cysteine lipidation. The disordered stretch occupies residues 428-457 (EAEREEDLADDTEPGDTAVGSTERRETDRG). Acidic residues predominate over residues 430–441 (EREEDLADDTEP).

Belongs to the LpqB lipoprotein family.

It localises to the cell membrane. The protein is Lipoprotein LpqB of Thermobifida fusca (strain YX).